Consider the following 177-residue polypeptide: Large ribosomal subunit protein uL6 (177 aa).

This sequence belongs to the universal ribosomal protein uL6 family. In terms of assembly, part of the 50S ribosomal subunit.

This protein binds to the 23S rRNA, and is important in its secondary structure. It is located near the subunit interface in the base of the L7/L12 stalk, and near the tRNA binding site of the peptidyltransferase center. The protein is Large ribosomal subunit protein uL6 of Aromatoleum aromaticum (strain DSM 19018 / LMG 30748 / EbN1) (Azoarcus sp. (strain EbN1)).